Reading from the N-terminus, the 373-residue chain is Unsaturated rhamnogalacturonyl hydrolase YteR (373 aa).

Residues 40–41 (HY), aspartate 88, and 132–136 (HKDGY) each bind substrate. Aspartate 143 serves as the catalytic Proton donor. Substrate is bound by residues 213 to 217 (RSIGW) and 333 to 334 (TS).

This sequence belongs to the glycosyl hydrolase 105 family. In terms of assembly, monomer.

The protein localises to the cytoplasm. The catalysed reaction is 2-O-(4-deoxy-beta-L-threo-hex-4-enopyranuronosyl)-alpha-L-rhamnose + H2O = 5-dehydro-4-deoxy-D-glucuronate + L-rhamnopyranose. Catalyzes the hydrolysis of unsaturated rhamnogalacturonan disaccharide to yield unsaturated D-galacturonic acid and L-rhamnose. It cannot act on unsaturated glucuronyl hydrolase (UGL) substrates containing unsaturated D-glucuronic acid at the non-reducing terminus, although the active pockets of YesR and UGL are very similar. The sequence is that of Unsaturated rhamnogalacturonyl hydrolase YteR (yteR) from Bacillus subtilis (strain 168).